The primary structure comprises 387 residues: Alanine racemase (387 aa).

The Proton acceptor; specific for D-alanine role is filled by lysine 38. The residue at position 38 (lysine 38) is an N6-(pyridoxal phosphate)lysine. Position 136 (arginine 136) interacts with substrate. Tyrosine 267 functions as the Proton acceptor; specific for L-alanine in the catalytic mechanism. Methionine 316 provides a ligand contact to substrate.

Belongs to the alanine racemase family. It depends on pyridoxal 5'-phosphate as a cofactor.

It carries out the reaction L-alanine = D-alanine. It participates in amino-acid biosynthesis; D-alanine biosynthesis; D-alanine from L-alanine: step 1/1. Catalyzes the interconversion of L-alanine and D-alanine. May also act on other amino acids. The chain is Alanine racemase (alr) from Clostridium tetani (strain Massachusetts / E88).